A 119-amino-acid polypeptide reads, in one-letter code: Ribonuclease P protein component (119 aa).

The protein belongs to the RnpA family. Consists of a catalytic RNA component (M1 or rnpB) and a protein subunit.

It carries out the reaction Endonucleolytic cleavage of RNA, removing 5'-extranucleotides from tRNA precursor.. Its function is as follows. RNaseP catalyzes the removal of the 5'-leader sequence from pre-tRNA to produce the mature 5'-terminus. It can also cleave other RNA substrates such as 4.5S RNA. The protein component plays an auxiliary but essential role in vivo by binding to the 5'-leader sequence and broadening the substrate specificity of the ribozyme. The protein is Ribonuclease P protein component of Streptococcus mutans serotype c (strain ATCC 700610 / UA159).